We begin with the raw amino-acid sequence, 350 residues long: MNLRGLFQDFNPSKFLIYACLLLFSVLLALRLDGIIQWSYWAVFAPIWLWKLMVIVGASVGTGVWARNPQYRAEGETCVEFKAMLIAVGIHLLLLMFEVLVCDRIERGSHFWLLVFMPLFFVSPVSVAACVWDFRHDRSLELEILCSVNILQFIFIALRLDKIIHWPWLVVCVPLWILMSFLCLVVLYYIVWSVLFLRSMDVIAEQRRTHITMALSWMTIVVPLLTFEILLVHKLDGHNAFSCIPIFVPLWLSLITLMATTFGQKGGNHWWFGIRKDFCQFLLEIFPFLREYGNISYDLHHEDNEETEETPVPEPPKIAPMFRKKARVVITQSPGKYALPPPKLNIEMPD.

Transmembrane regions (helical) follow at residues 16 to 36 (LIYA…DGII), 41 to 61 (WAVF…ASVG), 81 to 101 (FKAM…EVLV), 111 to 131 (FWLL…AACV), 177 to 197 (ILMS…VLFL), 211 to 231 (ITMA…EILL), and 240 to 260 (AFSC…LMAT). Residues 298-350 (DLHHEDNEETEETPVPEPPKIAPMFRKKARVVITQSPGKYALPPPKLNIEMPD) form a mediates interaction with MAP1B region.

Belongs to the TMEM185 family. In terms of assembly, interacts with MAP1B.

Its subcellular location is the cell projection. It is found in the dendrite. The protein resides in the membrane. This chain is Transmembrane protein 185A (TMEM185A), found in Pongo abelii (Sumatran orangutan).